The sequence spans 277 residues: NH(3)-dependent NAD(+) synthetase (277 aa).

Residue 46 to 53 participates in ATP binding; the sequence is GISGGQDS. A Mg(2+)-binding site is contributed by Asp-52. Deamido-NAD(+) is bound at residue Arg-142. An ATP-binding site is contributed by Thr-162. Glu-167 provides a ligand contact to Mg(2+). Deamido-NAD(+) is bound by residues Lys-175 and Asp-182. ATP contacts are provided by Lys-191 and Thr-213. 263–264 is a binding site for deamido-NAD(+); that stretch reads HK.

The protein belongs to the NAD synthetase family. As to quaternary structure, homodimer.

It catalyses the reaction deamido-NAD(+) + NH4(+) + ATP = AMP + diphosphate + NAD(+) + H(+). It participates in cofactor biosynthesis; NAD(+) biosynthesis; NAD(+) from deamido-NAD(+) (ammonia route): step 1/1. Catalyzes the ATP-dependent amidation of deamido-NAD to form NAD. Uses ammonia as a nitrogen source. This chain is NH(3)-dependent NAD(+) synthetase, found in Corynebacterium glutamicum (strain R).